The primary structure comprises 310 residues: Ninja-family protein 3 (310 aa).

3 disordered regions span residues 1-29, 68-140, and 156-215; these read MASRDFLGRFGGEKGASSDKAGGGAGEPD, SLPG…DDAQ, and DQGN…EQPP. Over residues 99 to 108 the composition is skewed to basic and acidic residues; sequence ERWRRREMQS. Polar residues-rich tracts occupy residues 156–166 and 176–193; these read DQGNASSSMPE and KSTSSMEISSDNNNQNKS.

The protein belongs to the Ninja family.

It localises to the nucleus. The protein is Ninja-family protein 3 (AFP-D1) of Triticum aestivum (Wheat).